The sequence spans 526 residues: Adenylyl cyclase-associated protein (526 aa).

The interval 1–168 (MPDSKYTMQG…RQSKYFAYLS (168 aa)) is adenyl cyclase-binding. 3 disordered regions span residues 43-72 (EASKNNKPSDSGADANTTNEPSAENAPEVE), 255-304 (QSTK…DANK), and 326-371 (KVDK…RPPR). Residues 45–64 (SKNNKPSDSGADANTTNEPS) show a composition bias toward polar residues. The SH3-binding signature appears at 169–369 (ALSEGAPLFS…KPSTLKTKRP (201 aa)). Residues 262 to 274 (ATSSPSPASATAA) show a composition bias toward low complexity. The segment covering 275–285 (PAPPPPPPAPP) has biased composition (pro residues). A compositionally biased stretch (polar residues) spans 290-302 (EISNDTPATSSDA). The segment covering 326–338 (KVDKSQQTHKNPE) has biased composition (basic and acidic residues). A compositionally biased stretch (low complexity) spans 342–352 (SSTVSSTGSKS). The segment at 354–361 (PPPRPKKP) is interaction with SH3 domain of ABP1. The segment covering 357 to 370 (RPKKPSTLKTKRPP) has biased composition (basic residues). One can recognise a C-CAP/cofactor C-like domain in the interval 369–504 (PPRKELVGNK…EDDDYVEFPI (136 aa)). The interval 370-526 (PRKELVGNKW…FKSAVFEHAG (157 aa)) is dimerization and actin-binding. Ser-454 carries the phosphoserine modification.

The protein belongs to the CAP family. Homodimer.

It is found in the cytoplasm. The protein resides in the cytoskeleton. It localises to the actin patch. In terms of biological role, the N-terminal domain binds to adenylyl cyclase, thereby enabling adenylyl cyclase to be activated by upstream regulatory signals, such as Ras. The C-terminal domain is required for normal cellular morphology and growth control. The polypeptide is Adenylyl cyclase-associated protein (SRV2) (Saccharomyces cerevisiae (strain ATCC 204508 / S288c) (Baker's yeast)).